The primary structure comprises 102 residues: Large ribosomal subunit protein uL24 (102 aa).

It belongs to the universal ribosomal protein uL24 family. Part of the 50S ribosomal subunit.

In terms of biological role, one of two assembly initiator proteins, it binds directly to the 5'-end of the 23S rRNA, where it nucleates assembly of the 50S subunit. Its function is as follows. One of the proteins that surrounds the polypeptide exit tunnel on the outside of the subunit. The chain is Large ribosomal subunit protein uL24 from Limosilactobacillus reuteri (strain DSM 20016) (Lactobacillus reuteri).